Here is a 385-residue protein sequence, read N- to C-terminus: DNA replication and repair protein RecF (385 aa).

30–37 contacts ATP; sequence GSNGFGKT.

It belongs to the RecF family.

The protein localises to the cytoplasm. The RecF protein is involved in DNA metabolism; it is required for DNA replication and normal SOS inducibility. RecF binds preferentially to single-stranded, linear DNA. It also seems to bind ATP. In Mycobacterium avium (strain 104), this protein is DNA replication and repair protein RecF.